Consider the following 408-residue polypeptide: Lipoate--protein ligase 1 (408 aa).

The transit peptide at 1–18 (MKRIFRLVRRCHYSTEKR) directs the protein to the mitochondrion. The BPL/LPL catalytic domain maps to 60–242 (KFNEPILFLW…EFTKFYEQNY (183 aa)). Residues Arg102, Gly107, and Tyr110 each contribute to the ATP site. Gly107 lines the (R)-lipoate pocket. Asp153 is a Mg(2+) binding site. Position 160 (Lys160) interacts with ATP. Lys160 is a binding site for (R)-lipoate.

The protein belongs to the LplA family.

It is found in the mitochondrion. The enzyme catalyses L-lysyl-[lipoyl-carrier protein] + (R)-lipoate + ATP = N(6)-[(R)-lipoyl]-L-lysyl-[lipoyl-carrier protein] + AMP + diphosphate + H(+). It carries out the reaction (R)-dihydrolipoate + L-lysyl-[lipoyl-carrier protein] + ATP = N(6)-[(R)-dihydrolipoyl]-L-lysyl-[lipoyl-carrier protein] + AMP + diphosphate + H(+). It catalyses the reaction (R)-dihydrolipoate + ATP + H(+) = N(6)-[(R)-dihydrolipoyl]-5'-AMP + diphosphate. The catalysed reaction is N(6)-[(R)-dihydrolipoyl]-5'-AMP + L-lysyl-[lipoyl-carrier protein] = N(6)-[(R)-dihydrolipoyl]-L-lysyl-[lipoyl-carrier protein] + AMP + 2 H(+). It functions in the pathway protein modification; protein lipoylation via exogenous pathway; protein N(6)-(lipoyl)lysine from lipoate: step 1/2. It participates in protein modification; protein lipoylation via exogenous pathway; protein N(6)-(lipoyl)lysine from lipoate: step 2/2. With respect to regulation, inhibited by the lipoate analog 8-bromo-octanoate (BrO). Catalytic activity is increased in the presence of Mg(2+). Its function is as follows. Catalyzes both the ATP-dependent activation of exogenously supplied lipoate to lipoyl-AMP and the transfer of the activated lipoyl onto the lipoyl domains of lipoate-dependent enzymes. In the mitochondrion, functions as a redox switch between two lipoylation routes. Senses the oxidation state of lipoate and determines which downstream enzymes will be lipoylated. In low reducing conditions, uses lipoate in its oxidized ring form to lipoylate glycine cleavage system H-protein GCVH. In high reducing conditions and together with LipL2, uses reduced lipoate (dihydrolipoate) to lipoylate the E2 component of the branched chain alpha-ketoacid dehydrogenase complex BCKDH-E2/BCDH and the E2 component of the alpha-ketoglutarate dehydrogenase complex KDH. LipL1 is responsible for catalysing the activation of lipoate, forming lipoyl-AMP while LipL2 is required but is not capable of catalyzing this reaction. In Plasmodium falciparum (isolate 3D7), this protein is Lipoate--protein ligase 1.